We begin with the raw amino-acid sequence, 210 residues long: Outer-membrane lipoprotein LolB (210 aa).

Positions 1–29 (MSLISNNEERSLRVRYCIAIALSALLISG) are cleaved as a signal peptide. C30 carries N-palmitoyl cysteine lipidation. Residue C30 is the site of S-diacylglycerol cysteine attachment.

This sequence belongs to the LolB family. Monomer.

The protein resides in the cell outer membrane. Functionally, plays a critical role in the incorporation of lipoproteins in the outer membrane after they are released by the LolA protein. The protein is Outer-membrane lipoprotein LolB of Coxiella burnetii (strain RSA 493 / Nine Mile phase I).